Here is a 285-residue protein sequence, read N- to C-terminus: ATP synthase gamma chain (285 aa).

Belongs to the ATPase gamma chain family. In terms of assembly, F-type ATPases have 2 components, CF(1) - the catalytic core - and CF(0) - the membrane proton channel. CF(1) has five subunits: alpha(3), beta(3), gamma(1), delta(1), epsilon(1). CF(0) has three main subunits: a, b and c.

It localises to the cell membrane. Its function is as follows. Produces ATP from ADP in the presence of a proton gradient across the membrane. The gamma chain is believed to be important in regulating ATPase activity and the flow of protons through the CF(0) complex. In Dehalococcoides mccartyi (strain ATCC BAA-2266 / KCTC 15142 / 195) (Dehalococcoides ethenogenes (strain 195)), this protein is ATP synthase gamma chain.